Here is a 235-residue protein sequence, read N- to C-terminus: MAREGKRIRAAREGIDPTKVYSLADAVKLIKERAKAKFDETFEISMNLGVDPRHADQMVRGVCNLPNGSGRTVRVAVFARGAKADEAKAAGADIVGAEDLLETIQGGTINFDRCIATPDMMPLVGRLGKVLGPRGLMPNPKVGTVTMDVKGAVGAAKGGAVEFRVEKAGIVHAGIGKVSFDDQKIVENARAFADAVARAKPSGAKGTYIQRIAVSSTMGPGIKVDPASVLAAATA.

This sequence belongs to the universal ribosomal protein uL1 family. As to quaternary structure, part of the 50S ribosomal subunit.

In terms of biological role, binds directly to 23S rRNA. The L1 stalk is quite mobile in the ribosome, and is involved in E site tRNA release. Protein L1 is also a translational repressor protein, it controls the translation of the L11 operon by binding to its mRNA. In Methylobacterium nodulans (strain LMG 21967 / CNCM I-2342 / ORS 2060), this protein is Large ribosomal subunit protein uL1.